Reading from the N-terminus, the 428-residue chain is Divergent protein kinase domain 1A (428 aa).

At 1-27 (MARSLCAGAWLRKPHYLQARLSYMRVK) the chain is on the cytoplasmic side. The chain crosses the membrane as a helical span at residues 28-48 (YLFFSWLVVFVGSWIIYVQYS). Over 49–428 (TYTELCRGKD…WKKISYTNDS (380 aa)) the chain is Lumenal.

The protein belongs to the DIPK family. Among the many cysteines in the lumenal domain, most are probably involved in disulfide bonds. In terms of tissue distribution, ubiquitous.

The protein resides in the endoplasmic reticulum membrane. The chain is Divergent protein kinase domain 1A (Dipk1a) from Mus musculus (Mouse).